An 86-amino-acid chain; its full sequence is Large ribosomal subunit protein eL43 (86 aa).

A C4-type zinc finger spans residues 38-59 (CPVCGRKAVRRISTGIWQCQKC).

This sequence belongs to the eukaryotic ribosomal protein eL43 family. The cofactor is Zn(2+).

The sequence is that of Large ribosomal subunit protein eL43 from Thermococcus gammatolerans (strain DSM 15229 / JCM 11827 / EJ3).